The following is a 244-amino-acid chain: Methylthioribulose-1-phosphate dehydratase (244 aa).

Substrate is bound at residue cysteine 104. Residues histidine 122 and histidine 124 each coordinate Zn(2+). Glutamate 148 serves as the catalytic Proton donor/acceptor. A Zn(2+)-binding site is contributed by histidine 204.

It belongs to the aldolase class II family. MtnB subfamily. Zn(2+) is required as a cofactor.

It localises to the cytoplasm. The catalysed reaction is 5-(methylsulfanyl)-D-ribulose 1-phosphate = 5-methylsulfanyl-2,3-dioxopentyl phosphate + H2O. It functions in the pathway amino-acid biosynthesis; L-methionine biosynthesis via salvage pathway; L-methionine from S-methyl-5-thio-alpha-D-ribose 1-phosphate: step 2/6. Catalyzes the dehydration of methylthioribulose-1-phosphate (MTRu-1-P) into 2,3-diketo-5-methylthiopentyl-1-phosphate (DK-MTP-1-P). In Cryptococcus neoformans var. neoformans serotype D (strain B-3501A) (Filobasidiella neoformans), this protein is Methylthioribulose-1-phosphate dehydratase.